A 90-amino-acid polypeptide reads, in one-letter code: Probable two-component-system connector protein YmgA (90 aa).

Residues 63 to 80 show a composition bias toward polar residues; the sequence is SDSGGPNRRTATADNKSM. The segment at 63-90 is disordered; that stretch reads SDSGGPNRRTATADNKSMFNGKKINRIH.

Its function is as follows. Probably a connector protein for RcsB/C regulation of biofilm formation, providing additional signal input into the two-component signaling pathway. May serve to stimulate biofilm maturation, probably via the Rcs phosphorelay. Mild overexpression at 16 degrees Celsius increases the production of colanic acid, an exopolysaccharide and matrix component, and reduces adhesive curli fimbriae expression. Both of these effects require RcsB. The sequence is that of Probable two-component-system connector protein YmgA (ymgA) from Escherichia coli (strain K12).